Here is a 979-residue protein sequence, read N- to C-terminus: Pimaradiene synthase pbcA (979 aa).

The short motif at V34 to W39 is the VYDTAW motif element. Positions D328–D331 match the DXDD B-type cyclization motif motif. Mg(2+) contacts are provided by D665, E669, N865, D866, S869, and D873. The short motif at D665 to E669 is the DEXXE A-type cyclization motif element.

The protein belongs to the terpene synthase family. The cofactor is Mg(2+).

The catalysed reaction is (2E,6E,10E)-geranylgeranyl diphosphate = ent-copalyl diphosphate. It carries out the reaction ent-copalyl diphosphate = ent-pimara-8(14),15-diene + diphosphate. It participates in secondary metabolite biosynthesis; terpenoid biosynthesis. Functionally, bifunctional terpene synthase; part of the gene cluster that mediates the biosynthesis of the diterpene ent-pimara-8(14),15-diene (PD). Within the cluster, the HMG-CoA reductase AN1593 functions in the mevalonate pathway, which produces isoprenoid precursors. The geranylgeranyl pyrophosphate (GGPP) synthase AN1592 is needed in the formation of GGPP, the precursor for diterpenes. Lastly, the pimaradiene synthase pbcA performs the 2 cyclization steps that convert GGPP to ent-pimara-8(14),15-diene with ent-copalyl diphosphate as an intermediate. The putative roles of the remaining cluster enzymes in ent-pimara-8(14),15-diene biosynthesis is unclear. The cytochrome P450 monooxygenase AN1598, the glutathione S-transferase AN1595, the oxidoreductases AN1596 and AN1597 probably function as decorative enzymes. It is possible that in biological conditions the compound is oxidized to ent-pimara-8(14),15-dien-19-oic acid, which is a bioactive diterpene compound predominant in many plant extracts. The protein is Pimaradiene synthase pbcA of Emericella nidulans (strain FGSC A4 / ATCC 38163 / CBS 112.46 / NRRL 194 / M139) (Aspergillus nidulans).